A 518-amino-acid chain; its full sequence is Sensor protein kinase HptS (518 aa).

2 helical membrane passes run 20–40 (IFPVFLVIIIGLVSFYAIYIW) and 222–242 (GITLLIVMAVVLVLLVIFGFI). In terms of domain architecture, Histidine kinase spans 297 to 513 (EQLIHSIEHT…LICYKIPLSR (217 aa)). At His325 the chain carries Phosphohistidine; by autocatalysis.

In terms of processing, autophosphorylated.

The protein localises to the cell membrane. It carries out the reaction ATP + protein L-histidine = ADP + protein N-phospho-L-histidine.. Functionally, member of the two-component regulatory system HptS/HptR that regulates genes involved in hexose phosphate transport system in response to changes in extracellular phosphate sources. May act as a sensor protein kinase which is autophosphorylated at a histidine residue and transfers its phosphate group to the conserved aspartic acid residue in the regulatory domain of HptS. In turn, HptS antagonizes CcpA-dependent transcription of a subset of CcpA-regulated genes involved in antibiotic susceptibility. In Staphylococcus aureus (strain MRSA252), this protein is Sensor protein kinase HptS (hptS).